We begin with the raw amino-acid sequence, 332 residues long: UDP-3-O-acylglucosamine N-acyltransferase (332 aa).

Histidine 231 (proton acceptor) is an active-site residue.

This sequence belongs to the transferase hexapeptide repeat family. LpxD subfamily. As to quaternary structure, homotrimer.

It catalyses the reaction a UDP-3-O-[(3R)-3-hydroxyacyl]-alpha-D-glucosamine + a (3R)-hydroxyacyl-[ACP] = a UDP-2-N,3-O-bis[(3R)-3-hydroxyacyl]-alpha-D-glucosamine + holo-[ACP] + H(+). Its pathway is bacterial outer membrane biogenesis; LPS lipid A biosynthesis. In terms of biological role, catalyzes the N-acylation of UDP-3-O-acylglucosamine using 3-hydroxyacyl-ACP as the acyl donor. Is involved in the biosynthesis of lipid A, a phosphorylated glycolipid that anchors the lipopolysaccharide to the outer membrane of the cell. The sequence is that of UDP-3-O-acylglucosamine N-acyltransferase from Ruthia magnifica subsp. Calyptogena magnifica.